The chain runs to 259 residues: LOB domain-containing protein CRL1 (259 aa).

The LOB domain occupies 6-108; that stretch reads SPCGACKFLR…AQLASLKAAA (103 aa).

It belongs to the LOB domain-containing protein family. Can form homodimers. Expressed in unelongating basal internodes, at the base of shoot in parenchyma cells adjacent to the peripheral vascular cylinder of the stem, and root pericycle cells. Expressed in lateral and adventitious root primordia, tiller primordia, vascular tissues, scutellum, and young pedicels.

It is found in the nucleus. Its function is as follows. Acts as a positive regulator of adventitious (crown) root formation by promoting its initiation. Acts as a positive regulator of lateral root formation. Regulated by the auxin response factor and transcriptional activator ARF23/ARF1. Involved in auxin-mediated cell dedifferentiation, and may promote the initial cell division in the pericycle cells adjacent to the peripheral vascular cylinder at the base of the stem. May act upstream of the gene regulatory network controlling adventitious root (crown) development. This is LOB domain-containing protein CRL1 from Oryza sativa subsp. japonica (Rice).